The following is a 156-amino-acid chain: MSGGLLKALRSDSYVELSQYRDQHFRGDNEEQEKLLKKSCTLYVGNLSFYTTEEQIYELFSKSGDIKKIIMGLDKMKKTACGFCFVEYYSRADAENAMRYINGTRLDDRIIRTDWDAGFKEGRQYGRGRSGGQVRDEYRQDYDAGRGGYGKLAQNQ.

An N-acetylserine modification is found at S2. A phosphoserine mark is found at S13 and S18. Residues Y20, Y43, 112 to 116 (RTDWD), 123 to 127 (RQYGR), and 133 to 134 (QV) each bind mRNA. The RRM domain maps to 40–118 (CTLYVGNLSF…RIIRTDWDAG (79 aa)). The disordered stretch occupies residues 124-156 (QYGRGRSGGQVRDEYRQDYDAGRGGYGKLAQNQ). Residues 134–144 (VRDEYRQDYDA) are compositionally biased toward basic and acidic residues. R146 carries the post-translational modification Omega-N-methylarginine.

The protein belongs to the RRM NCBP2 family. Component of the nuclear cap-binding complex (CBC), a heterodimer composed of NCBP1/CBP80 and NCBP2/CBP20 that interacts with m7GpppG-capped RNA. Found in a U snRNA export complex with PHAX/RNUXA, NCBP1/CBP80, NCBP2/CBP20, RAN, XPO1 and m7G-capped RNA. Interacts with PHAX/RNUXA, EIF4G1, HNRNPF, HNRNPH1 and ALYREF/THOC4/ALY. Interacts with SRRT/ARS2 and KPNA3.

Its subcellular location is the nucleus. It is found in the cytoplasm. In terms of biological role, component of the cap-binding complex (CBC), which binds co-transcriptionally to the 5' cap of pre-mRNAs and is involved in various processes such as pre-mRNA splicing, translation regulation, nonsense-mediated mRNA decay, RNA-mediated gene silencing (RNAi) by microRNAs (miRNAs) and mRNA export. The CBC complex is involved in mRNA export from the nucleus via its interaction with ALYREF/THOC4/ALY, leading to the recruitment of the mRNA export machinery to the 5' end of mRNA and to mRNA export in a 5' to 3' direction through the nuclear pore. The CBC complex is also involved in mediating U snRNA and intronless mRNAs export from the nucleus. The CBC complex is essential for a pioneer round of mRNA translation, before steady state translation when the CBC complex is replaced by cytoplasmic cap-binding protein eIF4E. The pioneer round of mRNA translation mediated by the CBC complex plays a central role in nonsense-mediated mRNA decay (NMD), NMD only taking place in mRNAs bound to the CBC complex, but not on eIF4E-bound mRNAs. The CBC complex enhances NMD in mRNAs containing at least one exon-junction complex (EJC) via its interaction with UPF1, promoting the interaction between UPF1 and UPF2. The CBC complex is also involved in 'failsafe' NMD, which is independent of the EJC complex, while it does not participate in Staufen-mediated mRNA decay (SMD). During cell proliferation, the CBC complex is also involved in microRNAs (miRNAs) biogenesis via its interaction with SRRT/ARS2, thereby being required for miRNA-mediated RNA interference. The CBC complex also acts as a negative regulator of PARN, thereby acting as an inhibitor of mRNA deadenylation. In the CBC complex, NCBP2/CBP20 recognizes and binds capped RNAs (m7GpppG-capped RNA) but requires NCBP1/CBP80 to stabilize the movement of its N-terminal loop and lock the CBC into a high affinity cap-binding state with the cap structure. The conventional cap-binding complex with NCBP2 binds both small nuclear RNA (snRNA) and messenger (mRNA) and is involved in their export from the nucleus. This Bos taurus (Bovine) protein is Nuclear cap-binding protein subunit 2 (NCBP2).